We begin with the raw amino-acid sequence, 559 residues long: Thermosome subunit alpha (559 aa).

Positions Ser536–Ser552 are enriched in basic and acidic residues. Positions Ser536–Glu559 are disordered.

It belongs to the TCP-1 chaperonin family. In terms of assembly, forms a Heterooligomeric complex of two stacked nine-membered rings; one of alpha and the other of beta subunits.

Functionally, molecular chaperone; binds unfolded polypeptides in vitro, and has a weak ATPase activity. The protein is Thermosome subunit alpha (thsA) of Sulfurisphaera tokodaii (strain DSM 16993 / JCM 10545 / NBRC 100140 / 7) (Sulfolobus tokodaii).